Consider the following 271-residue polypeptide: Dipeptidyl-peptidase 6 (271 aa).

SH3b domains are found at residues 1–64 (MNAI…LFDD) and 72–140 (QKAQ…HPKI). A NlpC/P60 domain is found at 148–268 (HAFRENVVQT…DLATTITAIG (121 aa)). The active-site Nucleophile is the Cys178. His224 (proton acceptor) is an active-site residue. His236 is a catalytic residue.

This sequence belongs to the peptidase C40 family.

The protein resides in the cytoplasm. Functionally, involved in cell sporulation. Hydrolyzes gamma-D-Glu-L-(meso)A2pm linkages only in those peptide units that have a free N-terminal L-alanine. The sequence is that of Dipeptidyl-peptidase 6 from Lysinibacillus sphaericus (Bacillus sphaericus).